The following is a 406-amino-acid chain: 4-hydroxy-3-methylbut-2-en-1-yl diphosphate synthase (ferredoxin) (406 aa).

[4Fe-4S] cluster is bound by residues Cys315, Cys318, Cys349, and Glu356.

It belongs to the IspG family. The cofactor is [4Fe-4S] cluster.

The enzyme catalyses (2E)-4-hydroxy-3-methylbut-2-enyl diphosphate + 2 oxidized [2Fe-2S]-[ferredoxin] + H2O = 2-C-methyl-D-erythritol 2,4-cyclic diphosphate + 2 reduced [2Fe-2S]-[ferredoxin] + H(+). It participates in isoprenoid biosynthesis; isopentenyl diphosphate biosynthesis via DXP pathway; isopentenyl diphosphate from 1-deoxy-D-xylulose 5-phosphate: step 5/6. In terms of biological role, converts 2C-methyl-D-erythritol 2,4-cyclodiphosphate (ME-2,4cPP) into 1-hydroxy-2-methyl-2-(E)-butenyl 4-diphosphate. The sequence is that of 4-hydroxy-3-methylbut-2-en-1-yl diphosphate synthase (ferredoxin) from Microcystis aeruginosa (strain NIES-843 / IAM M-2473).